Consider the following 314-residue polypeptide: MLVSGRRRLLTALLQARKWPFQPSRDMRLVQFQAPHLVGPHLGLETGNGGGVINLNAFDPTLPKTMTQFLEQGEATLSVARRALAAQLPVLPRSEVTFLAPVTRPDKVVCVRMNYVDHCKEQNVPVPKEPFIFSKFASSIVGPYDEVVLPPQSQEVDWEVELAVVIGKKGKHIKATDAMAHVAGFTVAHDVSARDWQMRRNGKQWLLGKTFDTFCPLGPALVTKDSVADPHNLKICCRVNGELVQSSNTNQMVFKTEDLIAWVSQFVTFYPGDVILTGTPPGVGVFRKPPVFLKKGDEVQCEIEELGVIINKVV.

The a divalent metal cation site is built by Glu159, Glu161, and Asp190. N6-acetyllysine; alternate is present on Lys203. Lys203 carries the N6-succinyllysine; alternate modification. Lys234 carries the N6-acetyllysine modification.

Belongs to the FAH family. Ca(2+) is required as a cofactor. Requires Mg(2+) as cofactor.

Its function is as follows. May have hydrolase activity. The chain is Fumarylacetoacetate hydrolase domain-containing protein 2 (FAHD2) from Pongo abelii (Sumatran orangutan).